The chain runs to 395 residues: Chaperone protein DnaJ (395 aa).

The J domain maps to 4 to 69 (DYYEVLGLSR…DKRRRYDQFG (66 aa)). The segment at 151–232 (GVEKTLKIKK…CYGEGIKQGE (82 aa)) adopts a CR-type zinc-finger fold. Zn(2+)-binding residues include Cys-164, Cys-167, Cys-180, Cys-183, Cys-206, Cys-209, Cys-220, and Cys-223. CXXCXGXG motif repeat units follow at residues 164-171 (CTECNGTG), 180-187 (CPTCHGSG), 206-213 (CPTCGGEG), and 220-227 (CVSCYGEG).

Belongs to the DnaJ family. In terms of assembly, homodimer. The cofactor is Zn(2+).

The protein resides in the cytoplasm. Functionally, participates actively in the response to hyperosmotic and heat shock by preventing the aggregation of stress-denatured proteins and by disaggregating proteins, also in an autonomous, DnaK-independent fashion. Unfolded proteins bind initially to DnaJ; upon interaction with the DnaJ-bound protein, DnaK hydrolyzes its bound ATP, resulting in the formation of a stable complex. GrpE releases ADP from DnaK; ATP binding to DnaK triggers the release of the substrate protein, thus completing the reaction cycle. Several rounds of ATP-dependent interactions between DnaJ, DnaK and GrpE are required for fully efficient folding. Also involved, together with DnaK and GrpE, in the DNA replication of plasmids through activation of initiation proteins. This chain is Chaperone protein DnaJ, found in Chlorobium phaeobacteroides (strain DSM 266 / SMG 266 / 2430).